We begin with the raw amino-acid sequence, 348 residues long: Ion-translocating oxidoreductase complex subunit D (348 aa).

Helical transmembrane passes span 23-43 (WVLA…GYGT), 44-64 (LIQL…IMLL), 72-91 (ALRD…AIPP), and 126-146 (IAYV…MAPI). Threonine 187 bears the FMN phosphoryl threonine mark. The next 5 membrane-spanning stretches (helical) occupy residues 214 to 234 (FAGI…LILL), 243 to 263 (IPMA…LFAP), 266 to 286 (TASP…FFIA), 300 to 320 (LIYG…GGFP), and 321 to 341 (DGVA…DYYT).

It belongs to the NqrB/RnfD family. In terms of assembly, the complex is composed of six subunits: RnfA, RnfB, RnfC, RnfD, RnfE and RnfG. Requires FMN as cofactor.

The protein resides in the cell inner membrane. In terms of biological role, part of a membrane-bound complex that couples electron transfer with translocation of ions across the membrane. In Vibrio cholerae serotype O1 (strain ATCC 39315 / El Tor Inaba N16961), this protein is Ion-translocating oxidoreductase complex subunit D.